We begin with the raw amino-acid sequence, 491 residues long: GTPase Der (491 aa).

The EngA-type G 1 domain occupies 3–166 (PVIALVGRPN…AALGIFPRDD (164 aa)). GTP-binding positions include 9 to 16 (GRPNVGKS), 56 to 60 (DTGGI), and 118 to 121 (NKVD). Residues 164–191 (RDDEGEEGEGEAEVVAEGEEPKRVPGPS) form a disordered region. Positions 166–181 (DEGEEGEGEAEVVAEG) are enriched in acidic residues. A compositionally biased stretch (basic and acidic residues) spans 182–191 (EEPKRVPGPS). In terms of domain architecture, EngA-type G 2 spans 196–369 (IKIAIIGRPN…SVQAAFQSAV (174 aa)). GTP is bound by residues 202 to 209 (GRPNVGKS), 249 to 253 (DTAGV), and 314 to 317 (NKWD). Residues 370–454 (TRWPTSRLTR…PIRIEYKGGD (85 aa)) enclose the KH-like domain. Over residues 452-464 (GGDNPYEGKKNSL) the composition is skewed to basic and acidic residues. The interval 452–491 (GGDNPYEGKKNSLTERQVNKKRRLMSHHKKAEKKRRDKKR) is disordered. Residues 470-491 (NKKRRLMSHHKKAEKKRRDKKR) are compositionally biased toward basic residues.

This sequence belongs to the TRAFAC class TrmE-Era-EngA-EngB-Septin-like GTPase superfamily. EngA (Der) GTPase family. Associates with the 50S ribosomal subunit.

In terms of biological role, GTPase that plays an essential role in the late steps of ribosome biogenesis. This is GTPase Der from Azotobacter vinelandii (strain DJ / ATCC BAA-1303).